We begin with the raw amino-acid sequence, 271 residues long: Ribosomal RNA small subunit methyltransferase A (271 aa).

6 residues coordinate S-adenosyl-L-methionine: His-11, Leu-13, Gly-38, Glu-58, Asp-86, and Asn-101.

This sequence belongs to the class I-like SAM-binding methyltransferase superfamily. rRNA adenine N(6)-methyltransferase family. RsmA subfamily.

It is found in the cytoplasm. It catalyses the reaction adenosine(1518)/adenosine(1519) in 16S rRNA + 4 S-adenosyl-L-methionine = N(6)-dimethyladenosine(1518)/N(6)-dimethyladenosine(1519) in 16S rRNA + 4 S-adenosyl-L-homocysteine + 4 H(+). In terms of biological role, specifically dimethylates two adjacent adenosines (A1518 and A1519) in the loop of a conserved hairpin near the 3'-end of 16S rRNA in the 30S particle. May play a critical role in biogenesis of 30S subunits. This Helicobacter pylori (strain J99 / ATCC 700824) (Campylobacter pylori J99) protein is Ribosomal RNA small subunit methyltransferase A.